The chain runs to 296 residues: Fructose-bisphosphate aldolase class 1 (296 aa).

E175 functions as the Proton acceptor in the catalytic mechanism. K212 (schiff-base intermediate with dihydroxyacetone-P) is an active-site residue.

This sequence belongs to the class I fructose-bisphosphate aldolase family.

It catalyses the reaction beta-D-fructose 1,6-bisphosphate = D-glyceraldehyde 3-phosphate + dihydroxyacetone phosphate. It participates in carbohydrate degradation; glycolysis; D-glyceraldehyde 3-phosphate and glycerone phosphate from D-glucose: step 4/4. The chain is Fructose-bisphosphate aldolase class 1 from Staphylococcus haemolyticus (strain JCSC1435).